The chain runs to 107 residues: Iron-sulfur cluster assembly protein CyaY (107 aa).

The protein belongs to the frataxin family.

Its function is as follows. Involved in iron-sulfur (Fe-S) cluster assembly. May act as a regulator of Fe-S biogenesis. The sequence is that of Iron-sulfur cluster assembly protein CyaY from Neisseria meningitidis serogroup A / serotype 4A (strain DSM 15465 / Z2491).